The chain runs to 532 residues: Chromobox protein homolog 2 (532 aa).

The involved in the interaction with H3C15 and H3C1 stretch occupies residues Met1–Glu66. A Chromo domain is found at Phe12 to Arg70. The span at Lys60–Asn69 shows a compositional bias: basic and acidic residues. Residues Lys60 to Leu204 are disordered. The segment covering Arg70–Lys82 has biased composition (basic residues). The segment at residues Arg75–Ser87 is a DNA-binding region (a.T hook). The span at Lys103–Ser119 shows a compositional bias: low complexity. Basic and acidic residues predominate over residues Leu128–His140. Residues Lys146 and Lys153 each participate in a glycyl lysine isopeptide (Lys-Gly) (interchain with G-Cter in SUMO2) cross-link. Residues Lys163 to Pro168 carry the Nuclear localization signal motif. Residue Arg247 is modified to Asymmetric dimethylarginine; alternate. An Omega-N-methylarginine; alternate modification is found at Arg247. Disordered regions lie at residues Lys296–Thr348 and Lys379–Trp493. Residue Ser302 is modified to Phosphoserine. Residues Ser464–Ser478 are compositionally biased toward low complexity. Residues Thr479–Trp493 are compositionally biased toward polar residues.

Component of a PRC1-like complex. The composition of the PRC1 complex may differ between the PRC1 complex in pluripotent embryonic stem cells containing RNF2, CBX7 and PCGF2, and the PRC1 complex in differentiating cells containing RNF2, CBX2, CBX4 and BMI1. May interact with H3C15, H3C1 and RNF2. Interacts (via chromodomain) with histone H3K9Me3 and H3K27me3.

It is found in the nucleus. It localises to the chromosome. Functionally, component of a Polycomb group (PcG) multiprotein PRC1-like complex, a complex class required to maintain the transcriptionally repressive state of many genes, including Hox genes, throughout development. PcG PRC1 complex acts via chromatin remodeling and modification of histones; it mediates monoubiquitination of histone H2A 'Lys-119', rendering chromatin heritably changed in its expressibility. Binds to histone H3 trimethylated at 'Lys-9' (H3K9me3) or at 'Lys-27' (H3K27me3). Plays a role in the lineage differentiation of the germ layers in embryonic development. Involved in sexual development, acting as activator of NR5A1 expression. This chain is Chromobox protein homolog 2 (CBX2), found in Homo sapiens (Human).